Reading from the N-terminus, the 578-residue chain is Alpha-(1,6)-fucosyltransferase (578 aa).

The Cytoplasmic portion of the chain corresponds to 1-9 (MRPWTGSWR). Residues 10–30 (WIMLILFAWGTLLFYIGGHLV) form a helical; Signal-anchor for type II membrane protein membrane-spanning segment. The Lumenal portion of the chain corresponds to 31-578 (RDNENPDHSS…KYPTYQEAEK (548 aa)). Intrachain disulfides connect Cys207–Cys269, Cys215–Cys233, and Cys221–Cys225. The GT23 domain occupies 209 to 496 (KAKKLVCNIN…PDASAHFHSL (288 aa)). The short motif at 302–308 (PRPPYLP) is the SH3-binding element. The interval 368–369 (RR) is important for donor substrate binding. Cys468 and Cys475 form a disulfide bridge. An SH3 domain is found at 505–566 (QNAHNQLAIY…PSYKVKEKIE (62 aa)).

Belongs to the glycosyltransferase 23 family.

The protein localises to the golgi apparatus. It localises to the golgi stack membrane. The catalysed reaction is N(4)-{beta-D-GlcNAc-(1-&gt;2)-alpha-D-Man-(1-&gt;3)-[beta-D-GlcNAc-(1-&gt;2)-alpha-D-Man-(1-&gt;6)]-beta-D-Man-(1-&gt;4)-beta-D-GlcNAc-(1-&gt;4)-beta-D-GlcNAc}-L-asparaginyl-[protein] + GDP-beta-L-fucose = an N(4)-{beta-D-GlcNAc-(1-&gt;2)-alpha-D-Man-(1-&gt;3)-[beta-D-GlcNAc-(1-&gt;2)-alpha-D-Man-(1-&gt;6)]-beta-D-Man-(1-&gt;4)-beta-D-GlcNAc-(1-&gt;4)-[alpha-L-Fuc-(1-&gt;6)]-beta-D-GlcNAc}-L-asparaginyl-[protein] + GDP + H(+). It participates in protein modification; protein glycosylation. Functionally, catalyzes the addition of fucose in alpha 1-6 linkage to the first GlcNAc residue, next to the peptide chains in N-glycans. The polypeptide is Alpha-(1,6)-fucosyltransferase (fut8) (Xenopus tropicalis (Western clawed frog)).